The primary structure comprises 267 residues: Transcription factor LBX1 (267 aa).

The span at 1–21 (MTSKDEAKSSASSVEERRRNA) shows a compositional bias: basic and acidic residues. The tract at residues 1–36 (MTSKDEAKSSASSVEERRRNALDLLPPPANSNKPLT) is disordered. A DNA-binding region (homeobox) is located at residues 127–186 (RRKSRTAFTNHQIYELEKRFLYQKYLSPADRDQIAQQLGLTNAQVITWFQNRRAKLKRDL). Positions 211-267 (SELEESGSERGNSRSRSPQLGLTSNHMPLSPSXPLTDQHASKECSEDEEDVEIDVDD) are disordered. Positions 228 to 237 (PQLGLTSNHM) are enriched in polar residues. Positions 255-267 (SEDEEDVEIDVDD) are enriched in acidic residues.

As to expression, expressed in all myoblasts that will populate body wall muscles as well as in a group of cells the migrate into the head.

The protein localises to the nucleus. In terms of biological role, transcription factor that controls hypaxial muscle development by down-regulating myod1 and cdkn1b/p27, thereby allowing myoblasts to proliferate before the onset of terminal differentiation. The polypeptide is Transcription factor LBX1 (Xenopus laevis (African clawed frog)).